A 102-amino-acid polypeptide reads, in one-letter code: Small ribosomal subunit protein uS10 (102 aa).

This sequence belongs to the universal ribosomal protein uS10 family. In terms of assembly, part of the 30S ribosomal subunit.

Its function is as follows. Involved in the binding of tRNA to the ribosomes. The protein is Small ribosomal subunit protein uS10 of Mycoplasma capricolum subsp. capricolum (strain California kid / ATCC 27343 / NCTC 10154).